Reading from the N-terminus, the 646-residue chain is Long-chain fatty acid transport protein 1 (646 aa).

The Extracellular segment spans residues 1–13 (MRTPGAGTASVAS). The helical transmembrane segment at 14–34 (LGLLWLLGLPWTWSAAAAFGV) threads the bilayer. Residues 35–646 (YVGSGGWRFL…ARICAGDFSL (612 aa)) are Cytoplasmic-facing. The tract at residues 191–475 (EVSEQLGKSL…YVSDSATNKK (285 aa)) is sufficient for oligomerization. Residue 246 to 257 (YIYTSGTTGLPK) coordinates AMP.

Belongs to the ATP-dependent AMP-binding enzyme family. In terms of assembly, self-associates. May function as a homodimer. Interacts with EPRS1; mediates the translocation of SLC27A1 from the cytoplasm to the plasma membrane thereby increasing the uptake of long-chain fatty acids. Interacts with DGAT2 and this interaction is enhanced in the presence of ZFYVE1. As to expression, expressed in muscle.

Its subcellular location is the cell membrane. The protein localises to the endomembrane system. The protein resides in the cytoplasm. The catalysed reaction is a fatty acid(in) = a fatty acid(out). It catalyses the reaction (9Z)-octadecenoate(out) = (9Z)-octadecenoate(in). It carries out the reaction hexadecanoate(out) = hexadecanoate(in). The enzyme catalyses (5Z,8Z,11Z,14Z)-eicosatetraenoate(out) = (5Z,8Z,11Z,14Z)-eicosatetraenoate(in). The catalysed reaction is (9Z,12Z)-octadecadienoate(out) = (9Z,12Z)-octadecadienoate(in). It catalyses the reaction a long-chain fatty acid + ATP + CoA = a long-chain fatty acyl-CoA + AMP + diphosphate. It carries out the reaction (5Z,8Z,11Z,14Z)-eicosatetraenoate + ATP + CoA = (5Z,8Z,11Z,14Z)-eicosatetraenoyl-CoA + AMP + diphosphate. The enzyme catalyses a very long-chain fatty acid + ATP + CoA = a very long-chain fatty acyl-CoA + AMP + diphosphate. The catalysed reaction is tetracosanoate + ATP + CoA = tetracosanoyl-CoA + AMP + diphosphate. Inhibited by Triacsin C. In terms of biological role, mediates the import of long-chain fatty acids (LCFA) into the cell by facilitating their transport at the plasma membrane. Also functions as an acyl-CoA ligase catalyzing the ATP-dependent formation of fatty acyl-CoA using LCFA and very-long-chain fatty acids (VLCFA) as substrates, which prevents fatty acid efflux from cells and might drive more fatty acid uptake. May act directly as a bona fide transporter, or alternatively, in a cytoplasmic or membrane-associated multimeric protein complex to trap and draw fatty acids towards accumulation. Plays a pivotal role in regulating available LCFA substrates from exogenous sources in tissues undergoing high levels of beta-oxidation or triglyceride synthesis. May be involved in regulation of cholesterol metabolism. Probably involved in fatty acid transport across the blood barrier. The chain is Long-chain fatty acid transport protein 1 from Rattus norvegicus (Rat).